The following is a 139-amino-acid chain: Ribosome-binding factor A (139 aa).

The interval 112–139 (EARTQGQAAPAPDVEPAPGAAPDDEAEE) is disordered. Low complexity predominate over residues 119–132 (AAPAPDVEPAPGAA).

The protein belongs to the RbfA family. In terms of assembly, monomer. Binds 30S ribosomal subunits, but not 50S ribosomal subunits or 70S ribosomes.

Its subcellular location is the cytoplasm. Functionally, one of several proteins that assist in the late maturation steps of the functional core of the 30S ribosomal subunit. Associates with free 30S ribosomal subunits (but not with 30S subunits that are part of 70S ribosomes or polysomes). Required for efficient processing of 16S rRNA. May interact with the 5'-terminal helix region of 16S rRNA. The polypeptide is Ribosome-binding factor A (Anaeromyxobacter dehalogenans (strain 2CP-1 / ATCC BAA-258)).